A 353-amino-acid chain; its full sequence is Ribosomal RNA small subunit methyltransferase C (353 aa).

Belongs to the methyltransferase superfamily. RsmC family. As to quaternary structure, monomer.

The protein localises to the cytoplasm. It catalyses the reaction guanosine(1207) in 16S rRNA + S-adenosyl-L-methionine = N(2)-methylguanosine(1207) in 16S rRNA + S-adenosyl-L-homocysteine + H(+). In terms of biological role, specifically methylates the guanine in position 1207 of 16S rRNA in the 30S particle. The chain is Ribosomal RNA small subunit methyltransferase C from Marinomonas sp. (strain MWYL1).